A 398-amino-acid polypeptide reads, in one-letter code: Succinate--CoA ligase [ADP-forming] subunit beta (398 aa).

Residues K9–E254 form the ATP-grasp domain. Residues K46, G53 to G55, E109, A112, and E117 each bind ATP. 2 residues coordinate Mg(2+): N209 and D223. Substrate-binding positions include N274 and G331 to M333.

This sequence belongs to the succinate/malate CoA ligase beta subunit family. In terms of assembly, heterotetramer of two alpha and two beta subunits. Mg(2+) is required as a cofactor.

The catalysed reaction is succinate + ATP + CoA = succinyl-CoA + ADP + phosphate. It carries out the reaction GTP + succinate + CoA = succinyl-CoA + GDP + phosphate. The protein operates within carbohydrate metabolism; tricarboxylic acid cycle; succinate from succinyl-CoA (ligase route): step 1/1. Succinyl-CoA synthetase functions in the citric acid cycle (TCA), coupling the hydrolysis of succinyl-CoA to the synthesis of either ATP or GTP and thus represents the only step of substrate-level phosphorylation in the TCA. The beta subunit provides nucleotide specificity of the enzyme and binds the substrate succinate, while the binding sites for coenzyme A and phosphate are found in the alpha subunit. The protein is Succinate--CoA ligase [ADP-forming] subunit beta of Afipia carboxidovorans (strain ATCC 49405 / DSM 1227 / KCTC 32145 / OM5) (Oligotropha carboxidovorans).